A 410-amino-acid polypeptide reads, in one-letter code: Sensor-like histidine kinase SenX3 (410 aa).

2 consecutive transmembrane segments (helical) span residues 6 to 26 (ALLL…AVGM) and 46 to 66 (ITVS…AAVV). The Histidine kinase domain maps to 164–380 (NVSHELKTPV…TFTLALPALI (217 aa)). Residue histidine 167 is modified to Phosphohistidine; by autocatalysis. A disordered region spans residues 385–410 (DDERPEQAREPELRSNRSQREEELSR).

Autophosphorylated.

The protein resides in the cell membrane. It carries out the reaction ATP + protein L-histidine = ADP + protein N-phospho-L-histidine.. In terms of biological role, member of the two-component regulatory system SenX3/RegX3. Autophosphorylates, and then transfers the phosphate group to RegX3. The protein is Sensor-like histidine kinase SenX3 of Mycobacterium bovis (strain ATCC BAA-935 / AF2122/97).